We begin with the raw amino-acid sequence, 344 residues long: Beta-hexosaminidase (344 aa).

Residues aspartate 60, arginine 68, arginine 132, and 162-163 contribute to the substrate site; that span reads KH. Histidine 175 functions as the Proton donor/acceptor in the catalytic mechanism. Aspartate 247 functions as the Nucleophile in the catalytic mechanism.

It belongs to the glycosyl hydrolase 3 family. NagZ subfamily.

Its subcellular location is the cytoplasm. It catalyses the reaction Hydrolysis of terminal non-reducing N-acetyl-D-hexosamine residues in N-acetyl-beta-D-hexosaminides.. The protein operates within cell wall biogenesis; peptidoglycan recycling. Plays a role in peptidoglycan recycling by cleaving the terminal beta-1,4-linked N-acetylglucosamine (GlcNAc) from peptide-linked peptidoglycan fragments, giving rise to free GlcNAc, anhydro-N-acetylmuramic acid and anhydro-N-acetylmuramic acid-linked peptides. The sequence is that of Beta-hexosaminidase from Haemophilus ducreyi (strain 35000HP / ATCC 700724).